The following is a 796-amino-acid chain: Lon protease (796 aa).

Positions 19–213 (LPVVVTRGIF…LLKELIINRP (195 aa)) constitute a Lon N-terminal domain. ATP is bound at residue 376-383 (GPPGVGKT). The Lon proteolytic domain occupies 612–793 (ESQVGVVTGL…EDVYEIIFKN (182 aa)). Residues S699 and K742 contribute to the active site.

It belongs to the peptidase S16 family. As to quaternary structure, homohexamer. Organized in a ring with a central cavity.

It is found in the cytoplasm. The enzyme catalyses Hydrolysis of proteins in presence of ATP.. ATP-dependent serine protease that mediates the selective degradation of mutant and abnormal proteins as well as certain short-lived regulatory proteins. Required for cellular homeostasis and for survival from DNA damage and developmental changes induced by stress. Degrades polypeptides processively to yield small peptide fragments that are 5 to 10 amino acids long. Binds to DNA in a double-stranded, site-specific manner. This Mycoplasma mycoides subsp. mycoides SC (strain CCUG 32753 / NCTC 10114 / PG1) protein is Lon protease.